Reading from the N-terminus, the 49-residue chain is Large ribosomal subunit protein bL33 (49 aa).

The protein belongs to the bacterial ribosomal protein bL33 family.

In Clostridium botulinum (strain ATCC 19397 / Type A), this protein is Large ribosomal subunit protein bL33.